A 153-amino-acid polypeptide reads, in one-letter code: Prostaglandin E synthase (153 aa).

Residues M1–V13 lie on the Lumenal side of the membrane. A helical transmembrane segment spans residues L14–K42. R39 provides a ligand contact to glutathione. Topologically, residues K43 to R61 are cytoplasmic. Residues S62–S91 form a helical membrane-spanning segment. Glutathione is bound at residue R74–E78. At F92–N96 the chain is on the lumenal side. The helical transmembrane segment at P97–G120 threads the bilayer. H114 and Y118 together coordinate glutathione. The Cytoplasmic portion of the chain corresponds to K121–P124. Residues R125–L153 form a helical membrane-spanning segment. R127–Y131 is a glutathione binding site.

This sequence belongs to the MAPEG family. In terms of assembly, homotrimer. The cofactor is glutathione.

Its subcellular location is the membrane. It localises to the cytoplasm. It is found in the perinuclear region. It carries out the reaction prostaglandin H2 = prostaglandin E2. It catalyses the reaction 2-glyceryl-prostaglandin H2 = 2-glyceryl-prostaglandin E2. The catalysed reaction is prostaglandin G2 = (15S)-15-hydroperoxy-prostaglandin E2. The enzyme catalyses 1-chloro-2,4-dinitrobenzene + glutathione = 2,4-dinitrophenyl-S-glutathione + chloride + H(+). It carries out the reaction (5S)-hydroperoxy-(6E,8Z,11Z,14Z)-eicosatetraenoate + 2 glutathione = (5S)-hydroxy-(6E,8Z,11Z,14Z)-eicosatetraenoate + glutathione disulfide + H2O. It functions in the pathway lipid metabolism; prostaglandin biosynthesis. Its activity is regulated as follows. Activity is increased markedly in macrophages and osteoblasts following pro-inflammatory stimuli. Functionally, terminal enzyme of the cyclooxygenase (COX)-2-mediated prostaglandin E2 (PGE2) biosynthetic pathway. Catalyzes the glutathione-dependent oxidoreduction of prostaglandin endoperoxide H2 (PGH2) to prostaglandin E2 (PGE2) in response to inflammatory stimuli. Plays a key role in inflammation response, fever and pain. Also catalyzes the oxidoreduction of endocannabinoids into prostaglandin glycerol esters and PGG2 into 15-hydroperoxy-PGE2. In addition, displays low glutathione transferase and glutathione-dependent peroxidase activities, toward 1-chloro-2,4-dinitrobenzene and 5-hydroperoxyicosatetraenoic acid (5-HPETE), respectively. This chain is Prostaglandin E synthase (Ptges), found in Mus musculus (Mouse).